The primary structure comprises 563 residues: Arginine--tRNA ligase (563 aa).

Positions 121 to 131 (PNIAKPFSIGH) match the 'HIGH' region motif.

This sequence belongs to the class-I aminoacyl-tRNA synthetase family. In terms of assembly, monomer.

It localises to the cytoplasm. The enzyme catalyses tRNA(Arg) + L-arginine + ATP = L-arginyl-tRNA(Arg) + AMP + diphosphate. The chain is Arginine--tRNA ligase from Streptococcus pneumoniae (strain CGSP14).